Here is an 86-residue protein sequence, read N- to C-terminus: Putative membrane protein insertion efficiency factor (86 aa).

The tract at residues 66–86 (AGGHDPVPPVPPQRYPSAQEH) is disordered.

Belongs to the UPF0161 family.

It localises to the cell inner membrane. Could be involved in insertion of integral membrane proteins into the membrane. The protein is Putative membrane protein insertion efficiency factor of Nitratidesulfovibrio vulgaris (strain ATCC 29579 / DSM 644 / CCUG 34227 / NCIMB 8303 / VKM B-1760 / Hildenborough) (Desulfovibrio vulgaris).